Consider the following 130-residue polypeptide: Large ribosomal subunit protein bL12c (130 aa).

It belongs to the bacterial ribosomal protein bL12 family. In terms of assembly, homodimer. Part of the ribosomal stalk of the 50S ribosomal subunit. Forms a multimeric L10(L12)X complex, where L10 forms an elongated spine to which 2 to 4 L12 dimers bind in a sequential fashion. Binds GTP-bound translation factors.

The protein resides in the plastid. It localises to the chloroplast. In terms of biological role, forms part of the ribosomal stalk which helps the ribosome interact with GTP-bound translation factors. Is thus essential for accurate translation. This is Large ribosomal subunit protein bL12c from Cyanidium caldarium (Red alga).